The following is a 339-amino-acid chain: Protein RETICULATA-RELATED 2, chloroplastic (339 aa).

The transit peptide at 1–58 (MAAMAAKLHISTKSDQSNVRLPRLINLSRDPTARVLFPRNGSVSSLHTNFSSPNIMVP) directs the protein to the chloroplast. Gly residues predominate over residues 68-86 (IGNHGGGSGSGGGGGGYGG). The interval 68-92 (IGNHGGGSGSGGGGGGYGGSEEEES) is disordered. 2 helical membrane-spanning segments follow: residues 148–168 (FVFS…YLLA) and 213–233 (VFAT…NGLI).

The protein belongs to the RETICULATA family.

The protein localises to the plastid. It localises to the chloroplast membrane. May play a role in leaf development. This chain is Protein RETICULATA-RELATED 2, chloroplastic, found in Arabidopsis thaliana (Mouse-ear cress).